The sequence spans 398 residues: Acetate kinase (398 aa).

N8 provides a ligand contact to Mg(2+). K15 is an ATP binding site. R89 provides a ligand contact to substrate. Residue D146 is the Proton donor/acceptor of the active site. ATP-binding positions include 206 to 210 (HIGNG), 283 to 285 (DMR), and 331 to 335 (GMGEN). Mg(2+) is bound at residue E383.

This sequence belongs to the acetokinase family. In terms of assembly, homodimer. Mg(2+) serves as cofactor. It depends on Mn(2+) as a cofactor.

The protein resides in the cytoplasm. It carries out the reaction acetate + ATP = acetyl phosphate + ADP. It participates in metabolic intermediate biosynthesis; acetyl-CoA biosynthesis; acetyl-CoA from acetate: step 1/2. Functionally, catalyzes the formation of acetyl phosphate from acetate and ATP. Can also catalyze the reverse reaction. This Streptococcus pyogenes serotype M6 (strain ATCC BAA-946 / MGAS10394) protein is Acetate kinase.